The sequence spans 172 residues: MHCPFCRHPDSRVVDSRTTDDGTSIRRRRQCPDCSRRFTTVETASLMVIKRSGVTEPFSRTKVISGVRKACQGRPVTEDALAQLGQRVEEAVRATGSAELTTHDVGLAILGPLQELDLVAYLRFASVYRAFDSLEDFEAAIAELREHRLPAERSGGGTCGTGTVPVPAGTAD.

The segment at 3 to 34 (CPFCRHPDSRVVDSRTTDDGTSIRRRRQCPDC) is a zinc-finger region. Residues 46–136 (LMVIKRSGVT…VYRAFDSLED (91 aa)) form the ATP-cone domain. The disordered stretch occupies residues 152–172 (ERSGGGTCGTGTVPVPAGTAD). Residues 161–172 (TGTVPVPAGTAD) are compositionally biased toward low complexity.

It belongs to the NrdR family. Zn(2+) serves as cofactor.

Negatively regulates transcription of bacterial ribonucleotide reductase nrd genes and operons by binding to NrdR-boxes. The polypeptide is Transcriptional repressor NrdR (Streptomyces clavuligerus).